The sequence spans 65 residues: Small ribosomal subunit protein eS27 (65 aa).

4 residues coordinate Zn(2+): cysteine 21, cysteine 24, cysteine 40, and cysteine 43. Residues 21 to 43 form a C4-type zinc finger; the sequence is CRDCGNVQVVFARPSSTVTCNIC.

Belongs to the eukaryotic ribosomal protein eS27 family. In terms of assembly, part of the 30S ribosomal subunit. It depends on Zn(2+) as a cofactor.

This is Small ribosomal subunit protein eS27 from Thermoplasma acidophilum (strain ATCC 25905 / DSM 1728 / JCM 9062 / NBRC 15155 / AMRC-C165).